The primary structure comprises 584 residues: ATP-dependent RNA helicase MRH4, mitochondrial (584 aa).

The transit peptide at 1–49 (MQPVFSRFPYASKSGFISLASRGYAVSRNSGSSIKSNLRSKPRADTRWN) directs the protein to the mitochondrion. The segment covering 28 to 39 (RNSGSSIKSNLR) has biased composition (polar residues). Positions 28 to 92 (RNSGSSIKSN…QTQQQFQYGE (65 aa)) are disordered. Residues 63 to 79 (GKGDHRSHSRSDSRAKP) show a composition bias toward basic and acidic residues. Residues 162 to 169 (HLKPSPIQ) carry the Q motif motif. The region spanning 179–366 (TLMDPQLQVR…TRLFPTVGVI (188 aa)) is the Helicase ATP-binding domain. Residue 192–199 (AETGSGKT) participates in ATP binding. The short motif at 314-317 (DEAD) is the DEAD box element. Positions 397 to 584 (ALAQILYSIN…SIVSKNVSIS (188 aa)) constitute a Helicase C-terminal domain.

This sequence belongs to the DEAD box helicase family. MRH4 subfamily.

It localises to the mitochondrion. The catalysed reaction is ATP + H2O = ADP + phosphate + H(+). In terms of biological role, ATP-binding RNA helicase involved in mitochondrial RNA metabolism. Required for maintenance of mitochondrial DNA. This chain is ATP-dependent RNA helicase MRH4, mitochondrial (MRH4), found in Kluyveromyces lactis (strain ATCC 8585 / CBS 2359 / DSM 70799 / NBRC 1267 / NRRL Y-1140 / WM37) (Yeast).